The sequence spans 308 residues: Transcription factor zip-2 (308 aa).

A compositionally biased stretch (polar residues) spans 217-229 (QSSSSSTVETTIT). Positions 217-277 (QSSSSSTVET…RESKEERERL (61 aa)) are disordered. Residues 242–305 (SSDYRHKRDK…EDYKRLVMMF (64 aa)) form the bZIP domain. Residues 246–276 (RHKRDKNNLASQKSRQKRQAKIRESKEERER) form a basic motif region. Basic and acidic residues predominate over residues 266–277 (KIRESKEERERL). Residues 277-291 (LEKRKVQLQAMVLTL) form a leucine-zipper region.

The protein belongs to the bZIP family. C/EBP subfamily. Expressed in the pharynx and throughout the intestine.

The protein resides in the nucleus. Its function is as follows. Transcription factor that binds to the promoter and the enhancer regions of target genes. May act together with the bZIP transcription factor, cebp-2. Involved in responding to mitochondrial damage. Plays a role in the delay of age-associated mitochondrial fragmentation and muscle decline. Has a protective role in response to infection by the Gram-negative bacterium P.aeruginosa. Required to prevent P.aeruginosa ToxA-mediated lethality. Required for the activation of several infection response genes including irg-1 and irg-2 following P.aeruginosa infection; target gene activation may involve effects of the bacterial toxin, ToxA, and perhaps other toxins. This Caenorhabditis elegans protein is Transcription factor zip-2.